The following is an 89-amino-acid chain: MALSAQEKDAIVKEHQTSETDTGSPEVQIALLTANINKLQGHFADHKQDHHSRRGLIRMVNQRRKLLDYLKGKDVNRYAALIQKLGLRR.

The segment covering 1–18 has biased composition (basic and acidic residues); the sequence is MALSAQEKDAIVKEHQTS. A disordered region spans residues 1–25; that stretch reads MALSAQEKDAIVKEHQTSETDTGSP.

The protein belongs to the universal ribosomal protein uS15 family. Part of the 30S ribosomal subunit. Forms a bridge to the 50S subunit in the 70S ribosome, contacting the 23S rRNA.

Its function is as follows. One of the primary rRNA binding proteins, it binds directly to 16S rRNA where it helps nucleate assembly of the platform of the 30S subunit by binding and bridging several RNA helices of the 16S rRNA. In terms of biological role, forms an intersubunit bridge (bridge B4) with the 23S rRNA of the 50S subunit in the ribosome. This chain is Small ribosomal subunit protein uS15, found in Teredinibacter turnerae (strain ATCC 39867 / T7901).